The chain runs to 316 residues: tRNA uridine(34) hydroxylase (316 aa).

Residues 123 to 217 enclose the Rhodanese domain; that stretch reads LDEDTVVIDA…YGKNPETRGE (95 aa). Catalysis depends on Cys177, which acts as the Cysteine persulfide intermediate.

It belongs to the TrhO family.

It catalyses the reaction uridine(34) in tRNA + AH2 + O2 = 5-hydroxyuridine(34) in tRNA + A + H2O. In terms of biological role, catalyzes oxygen-dependent 5-hydroxyuridine (ho5U) modification at position 34 in tRNAs. This chain is tRNA uridine(34) hydroxylase, found in Enterococcus faecalis (strain ATCC 700802 / V583).